The primary structure comprises 868 residues: Receptor-like protein kinase At5g59670 (868 aa).

The signal sequence occupies residues 1–22; sequence MESSFGLLLALLTLTIIHIVQA. Residues 23 to 500 are Extracellular-facing; the sequence is QDPQGFISLD…PRLIKPPKKE (478 aa). Residues N38, N94, N141, N287, N300, N372, N405, N416, N423, N445, N464, and N471 are each glycosylated (N-linked (GlcNAc...) asparagine). 3 LRR repeats span residues 409–432, 433–459, and 461–481; these read PPRITSLNLSSSRLNGTIAAAIQS, ITQLETLDLSYNNLTGEVPEFLGKMKS, and SVINLSGNNLNGSIPQALRKK. The helical transmembrane segment at 501 to 521 threads the bilayer; it reads FPVAIVTLVVFVTVIVVLFLV. Residues 522-868 lie on the Cytoplasmic side of the membrane; sequence FRKKMSTIVK…LDTTAVPMAR (347 aa). At T555 the chain carries Phosphothreonine. The 271-residue stretch at 564–834 folds into the Protein kinase domain; that stretch reads KNFQRVLGKG…SMSQVIHELK (271 aa). Residues 570–578 and K592 contribute to the ATP site; that span reads LGKGGFGMV. A Phosphotyrosine modification is found at Y637. The active-site Proton acceptor is D689. A Phosphoserine modification is found at S723. Phosphothreonine occurs at positions 724 and 729.

It belongs to the protein kinase superfamily. Ser/Thr protein kinase family. Autophosphorylated on Tyr and Thr residues.

Its subcellular location is the cell membrane. It catalyses the reaction L-seryl-[protein] + ATP = O-phospho-L-seryl-[protein] + ADP + H(+). The catalysed reaction is L-threonyl-[protein] + ATP = O-phospho-L-threonyl-[protein] + ADP + H(+). The enzyme catalyses L-tyrosyl-[protein] + ATP = O-phospho-L-tyrosyl-[protein] + ADP + H(+). Functionally, probable receptor with a dual specificity kinase activity acting on both serine/threonine- and tyrosine-containing substrates. This Arabidopsis thaliana (Mouse-ear cress) protein is Receptor-like protein kinase At5g59670.